The chain runs to 391 residues: Origin recognition complex subunit 2 (391 aa).

The segment at 1–43 is disordered; the sequence is MEEYTDSGEDKNVYSDDDNDYFTASTQNNRTSKNTDSSPLDPK. The segment covering 22–38 has biased composition (polar residues); the sequence is FTASTQNNRTSKNTDSS.

It belongs to the ORC2 family. ORC is composed of six subunits.

The protein resides in the nucleus. Its function is as follows. Component of the origin recognition complex (ORC) that binds origins of replication. DNA-binding is ATP-dependent, however specific DNA sequences that define origins of replication have not been identified so far. ORC is required to assemble the pre-replication complex necessary to initiate DNA replication. The sequence is that of Origin recognition complex subunit 2 (orcB) from Dictyostelium discoideum (Social amoeba).